The following is a 295-amino-acid chain: Release factor glutamine methyltransferase (295 aa).

Residues 127–131, Asp150, Phe179, and Asn195 contribute to the S-adenosyl-L-methionine site; that span reads GTGSG. 195 to 198 provides a ligand contact to substrate; that stretch reads NPPY.

The protein belongs to the protein N5-glutamine methyltransferase family. PrmC subfamily.

The enzyme catalyses L-glutaminyl-[peptide chain release factor] + S-adenosyl-L-methionine = N(5)-methyl-L-glutaminyl-[peptide chain release factor] + S-adenosyl-L-homocysteine + H(+). Functionally, methylates the class 1 translation termination release factors RF1/PrfA and RF2/PrfB on the glutamine residue of the universally conserved GGQ motif. In Nitratidesulfovibrio vulgaris (strain ATCC 29579 / DSM 644 / CCUG 34227 / NCIMB 8303 / VKM B-1760 / Hildenborough) (Desulfovibrio vulgaris), this protein is Release factor glutamine methyltransferase.